We begin with the raw amino-acid sequence, 471 residues long: MSSLGTLGGARAGLGLLLGTAAGLGFLCALYSQRWKRTQRRGQSQSQSNSLDYTQTSEPGRQVRPLRAAPGEAGDAAVLSSLPRGQEVVLDRLEFVLTSLVALRREVEELRSSLQGLAGQIVGEVRSHMEENQKVARRRRFPFARERSDSTGSSSVYFTAASGATFTDAESEGGYTTANAESDYERDSERESDGDGEDEVSCETVKMGRKDSLDLEVEVALGLEPEAPEAGGSPGQEDVMPLLQQADELHQGSEQGKREGFQLLLNNKLVHGSRQDFLWRLARAYSDMCELTEEASEKRSYALSGKEEAEVALEKGNENAECHQWYAVLCGQLAEHEGIQRRIQSGFSFKEHVDKAIALKPENPMAHFLLGRWCYQVSHLSWLEKKTATALSESPLGATVQDALSSFLKAEELQPGFSKAGRIYICKCYKELGKNPEAKEWMKLALELPNVTKEDSAFQKDLEELEVILGE.

The Mitochondrial intermembrane segment spans residues 1 to 9 (MSSLGTLGG). A helical transmembrane segment spans residues 10–32 (ARAGLGLLLGTAAGLGFLCALYS). Topologically, residues 33–471 (QRWKRTQRRG…LEELEVILGE (439 aa)) are cytoplasmic. The interval 39 to 70 (QRRGQSQSQSNSLDYTQTSEPGRQVRPLRAAP) is disordered. The span at 41 to 50 (RGQSQSQSNS) shows a compositional bias: low complexity. 4 positions are modified to phosphoserine: Ser-44, Ser-46, Ser-50, and Ser-57. The stretch at 90–123 (LDRLEFVLTSLVALRREVEELRSSLQGLAGQIVG) forms a coiled coil. Residues 156–162 (VYFTAAS) carry the FFAT motif. The residue at position 159 (Thr-159) is a Phosphothreonine. The tract at residues 169–206 (AESEGGYTTANAESDYERDSERESDGDGEDEVSCETVK) is disordered. Residues Ser-182, Ser-192, Ser-212, and Ser-233 each carry the phosphoserine modification. Positions 183 to 193 (DYERDSERESD) are enriched in basic and acidic residues.

This sequence belongs to the RMDN family. Interacts with PTPN2. Interacts with microtubules. Interacts with VAPB. Interacts (via FFAT motif) with MOSPD2 (via MSP domain). Interacts (via phosphorylated FFAT motif) with MOSPD2, VAPA and VAPB. Phosphorylation at Thr-160 of the FFAT motif activates interaction with MOSPD2, VAPA and VAPB.

It localises to the mitochondrion outer membrane. Its subcellular location is the cytoplasm. It is found in the nucleus. The protein localises to the cytoskeleton. The protein resides in the spindle. It localises to the spindle pole. Involved in cellular calcium homeostasis regulation. May participate in differentiation and apoptosis of keratinocytes. Overexpression induces apoptosis. This Bos taurus (Bovine) protein is Regulator of microtubule dynamics protein 3.